Reading from the N-terminus, the 312-residue chain is Isoflavone reductase homolog (312 aa).

Residues 10-16, Arg-35, and Lys-44 each bind NADP(+); that span reads GGTGYVG. Lys-138 acts as the Proton acceptor in catalysis. NADP(+) is bound at residue Arg-142. His-270 contacts substrate.

Belongs to the NmrA-type oxidoreductase family. Isoflavone reductase subfamily.

The protein is Isoflavone reductase homolog of Lupinus albus (White lupine).